The sequence spans 187 residues: Nicotinamide-nucleotide adenylyltransferase (187 aa).

Belongs to the archaeal NMN adenylyltransferase family.

The protein localises to the cytoplasm. The catalysed reaction is beta-nicotinamide D-ribonucleotide + ATP + H(+) = diphosphate + NAD(+). The protein operates within cofactor biosynthesis; NAD(+) biosynthesis; NAD(+) from nicotinamide D-ribonucleotide: step 1/1. This chain is Nicotinamide-nucleotide adenylyltransferase, found in Thermococcus onnurineus (strain NA1).